A 183-amino-acid chain; its full sequence is Ribulose bisphosphate carboxylase small subunit, chloroplastic 5 (183 aa).

The transit peptide at 1-42 (MAAAMMNKSVLLNKQCGKPAAVPKVVMSKGGFARTSAVNKNR) directs the protein to the chloroplast.

Belongs to the RuBisCO small chain family. Heterohexadecamer of 8 large and 8 small subunits.

The protein localises to the plastid. The protein resides in the chloroplast. RuBisCO catalyzes two reactions: the carboxylation of D-ribulose 1,5-bisphosphate, the primary event in carbon dioxide fixation, as well as the oxidative fragmentation of the pentose substrate. Both reactions occur simultaneously and in competition at the same active site. Although the small subunit is not catalytic it is essential for maximal activity. This Acetabularia acetabulum (Mermaid's wine glass) protein is Ribulose bisphosphate carboxylase small subunit, chloroplastic 5.